The sequence spans 687 residues: Polyphosphate kinase (687 aa).

Position 45 (asparagine 45) interacts with ATP. Mg(2+) is bound by residues arginine 373 and arginine 403. The Phosphohistidine intermediate role is filled by histidine 433. Positions 466, 562, and 590 each coordinate ATP. The PLD phosphodiesterase domain maps to aspartate 585–asparagine 615.

It belongs to the polyphosphate kinase 1 (PPK1) family. Mg(2+) serves as cofactor. An intermediate of this reaction is the autophosphorylated ppk in which a phosphate is covalently linked to a histidine residue through a N-P bond.

The catalysed reaction is [phosphate](n) + ATP = [phosphate](n+1) + ADP. Its function is as follows. Catalyzes the reversible transfer of the terminal phosphate of ATP to form a long-chain polyphosphate (polyP). This Yersinia pestis protein is Polyphosphate kinase.